A 322-amino-acid polypeptide reads, in one-letter code: 4-diphosphocytidyl-2-C-methyl-D-erythritol kinase (322 aa).

Residue Lys-25 is part of the active site. Residue 110–120 coordinates ATP; the sequence is PVAGGMAGGSA. Asp-152 is an active-site residue.

Belongs to the GHMP kinase family. IspE subfamily.

It carries out the reaction 4-CDP-2-C-methyl-D-erythritol + ATP = 4-CDP-2-C-methyl-D-erythritol 2-phosphate + ADP + H(+). Its pathway is isoprenoid biosynthesis; isopentenyl diphosphate biosynthesis via DXP pathway; isopentenyl diphosphate from 1-deoxy-D-xylulose 5-phosphate: step 3/6. Functionally, catalyzes the phosphorylation of the position 2 hydroxy group of 4-diphosphocytidyl-2C-methyl-D-erythritol. The protein is 4-diphosphocytidyl-2-C-methyl-D-erythritol kinase of Mycolicibacterium vanbaalenii (strain DSM 7251 / JCM 13017 / BCRC 16820 / KCTC 9966 / NRRL B-24157 / PYR-1) (Mycobacterium vanbaalenii).